The sequence spans 343 residues: GTP 3',8-cyclase (343 aa).

One can recognise a Radical SAM core domain in the interval 19–244; sequence PYGRTISYLR…TDVDDSTGGP (226 aa). Arginine 28 provides a ligand contact to GTP. Cysteine 35 and cysteine 39 together coordinate [4Fe-4S] cluster. Tyrosine 41 is an S-adenosyl-L-methionine binding site. Cysteine 42 lines the [4Fe-4S] cluster pocket. Arginine 77 is a binding site for GTP. Glycine 81 is a binding site for S-adenosyl-L-methionine. Threonine 111 contacts GTP. An S-adenosyl-L-methionine-binding site is contributed by serine 135. Lysine 171 is a GTP binding site. Methionine 205 lines the S-adenosyl-L-methionine pocket. [4Fe-4S] cluster-binding residues include cysteine 268 and cysteine 271. 273 to 275 provides a ligand contact to GTP; the sequence is RVR. Cysteine 285 is a [4Fe-4S] cluster binding site.

It belongs to the radical SAM superfamily. MoaA family. Monomer and homodimer. [4Fe-4S] cluster is required as a cofactor.

It carries out the reaction GTP + AH2 + S-adenosyl-L-methionine = (8S)-3',8-cyclo-7,8-dihydroguanosine 5'-triphosphate + 5'-deoxyadenosine + L-methionine + A + H(+). The protein operates within cofactor biosynthesis; molybdopterin biosynthesis. Catalyzes the cyclization of GTP to (8S)-3',8-cyclo-7,8-dihydroguanosine 5'-triphosphate. This is GTP 3',8-cyclase from Nitrobacter hamburgensis (strain DSM 10229 / NCIMB 13809 / X14).